We begin with the raw amino-acid sequence, 527 residues long: MSDLLSRRLALLGAAANLPLLTECLHGIERECLRVDSDGKLALTPHPRALGSTLTHPQITTDYSEALLEFITPTETDVADTLGDLERIHRFASSQLDGEYLWSPSMPCELPDEESIPIARYGNSMIGRLKYVYRKGLALRYGKTMQCIAGIHYNFSLPEKLWPLLRQAEGSELAERDYQSAAYIALIRNFRRYSWLLMYLFGASPALDAGFLRGRPSQLERFDEHTLYLPYATSLRMSDLGYQNNAQAGLTPCYNDLQSYIDSLRKAVSTPYPAYEKIGTKQDGEWVQLNTNVLQIENEYYSSIRPKRVTYTGERPVQALAARGVQYVEVRCLDINPFLPLGIDLDEARFLDAFLLFCAFSDSPLLNGECSDATDNFLAVVKEGRRPGLQLRRRGQPVELKDWASELLERIADTAALLDRARGGEAHAAALAAQRAKVADPELTPSAQVLKVMRERGESFEAFSLRQSREHAEYFRQHPLAADEQARFEQMASASLAEQAELERDQDGDFDTFVAAYQASILGLISN.

The protein belongs to the glutamate--cysteine ligase type 1 family. Type 1 subfamily.

The catalysed reaction is L-cysteine + L-glutamate + ATP = gamma-L-glutamyl-L-cysteine + ADP + phosphate + H(+). It functions in the pathway sulfur metabolism; glutathione biosynthesis; glutathione from L-cysteine and L-glutamate: step 1/2. In Pseudomonas paraeruginosa (strain DSM 24068 / PA7) (Pseudomonas aeruginosa (strain PA7)), this protein is Glutamate--cysteine ligase.